The following is a 700-amino-acid chain: Dipeptidyl aminopeptidase 1 (700 aa).

The N-terminal stretch at 1–27 (MAKRIFSVSFLLVLLNVLHICIKFSVA) is a signal peptide. N-linked (GlcNAc...) asparagine glycosylation is found at Asn-52, Asn-144, Asn-265, Asn-337, and Asn-373. The propeptide occupies 210–369 (DNVNEIKHLD…SPKRELEINE (160 aa)). Disulfide bonds link Cys-395–Cys-446 and Cys-439–Cys-478. Cys-398 is an active-site residue. Thr-416 is subject to Sulfothreonine. 2 residues coordinate chloride: Phe-450 and Tyr-452. N-linked (GlcNAc...) asparagine glycosylation is found at Asn-481, Asn-490, and Asn-507. Tyr-549 is a binding site for chloride. Asn-615 carries N-linked (GlcNAc...) asparagine glycosylation. Catalysis depends on residues His-624 and Asn-648. The N-linked (GlcNAc...) asparagine glycan is linked to Asn-667.

The protein belongs to the peptidase C1 family. Monomer. Chloride is required as a cofactor.

It is found in the vacuole lumen. The protein resides in the parasitophorous vacuole lumen. The catalysed reaction is Release of an N-terminal dipeptide, Xaa-Yaa-|-Zaa-, except when Xaa is Arg or Lys, or Yaa or Zaa is Pro.. In terms of biological role, thiol protease that cleaves dipeptides from the N-terminus of protein substrates. Active against a broad range of dipeptide substrates composed of both polar and hydrophobic amino acids. Proline cannot occupy the P1 position and arginine or lysine cannot occupy the P2 position of the substrate. Involved in host hemoglobin degradation by generating dipeptides from hemoglobin-derived oligopeptides. The protein is Dipeptidyl aminopeptidase 1 of Plasmodium falciparum (isolate 3D7).